The sequence spans 214 residues: Adenylate kinase (214 aa).

10–15 (GAGKGT) contacts ATP. Residues 30–59 (STGDMLRAAVKAGSELGLKAKEIMDAGKLV) form an NMP region. AMP is bound by residues Thr-31, Arg-36, 57-59 (KLV), 85-88 (GFPR), and Gln-92. Residues 122-159 (GRRVHAASGRVYHVKFNPPKVEDKDDVTGEDLTIRKDD) are LID. Residues Arg-123 and 132-133 (VY) contribute to the ATP site. Arg-156 and Arg-167 together coordinate AMP. Arg-200 is an ATP binding site.

The protein belongs to the adenylate kinase family. As to quaternary structure, monomer.

The protein resides in the cytoplasm. It carries out the reaction AMP + ATP = 2 ADP. It functions in the pathway purine metabolism; AMP biosynthesis via salvage pathway; AMP from ADP: step 1/1. Functionally, catalyzes the reversible transfer of the terminal phosphate group between ATP and AMP. Plays an important role in cellular energy homeostasis and in adenine nucleotide metabolism. In Yersinia enterocolitica serotype O:8 / biotype 1B (strain NCTC 13174 / 8081), this protein is Adenylate kinase.